The primary structure comprises 358 residues: Phosphate acyltransferase (358 aa).

The segment at 336–358 (SAAGAAPASPETAPTPHPSTRAA) is disordered.

Belongs to the PlsX family. As to quaternary structure, homodimer. Probably interacts with PlsY.

It is found in the cytoplasm. The enzyme catalyses a fatty acyl-[ACP] + phosphate = an acyl phosphate + holo-[ACP]. The protein operates within lipid metabolism; phospholipid metabolism. Its function is as follows. Catalyzes the reversible formation of acyl-phosphate (acyl-PO(4)) from acyl-[acyl-carrier-protein] (acyl-ACP). This enzyme utilizes acyl-ACP as fatty acyl donor, but not acyl-CoA. This chain is Phosphate acyltransferase, found in Cupriavidus pinatubonensis (strain JMP 134 / LMG 1197) (Cupriavidus necator (strain JMP 134)).